Reading from the N-terminus, the 375-residue chain is Alcohol dehydrogenase 6 (375 aa).

Positions 47, 69, 99, 102, 105, 113, and 175 each coordinate Zn(2+). NAD(+) is bound by residues 200 to 205, Asp-224, Lys-229, 293 to 295, and Arg-370; these read GLGGVG and VGS.

Belongs to the zinc-containing alcohol dehydrogenase family. Class-V subfamily. Dimer. Zn(2+) serves as cofactor. In terms of tissue distribution, liver.

It localises to the cytoplasm. It carries out the reaction a primary alcohol + NAD(+) = an aldehyde + NADH + H(+). The enzyme catalyses a secondary alcohol + NAD(+) = a ketone + NADH + H(+). Functionally, alcohol dehydrogenase. Catalyzes the NAD-dependent oxidation of primary alcohols to the corresponding aldehydes. Oxidizes secondary alcohols to the corresponding ketones. This Peromyscus maniculatus (North American deer mouse) protein is Alcohol dehydrogenase 6 (ADH6).